Consider the following 513-residue polypeptide: uncharacterized protein (513 aa).

The interval 1–48 (MGSSEEQSVPGDDFYEESGDLNTGLSLVLRPAKSNEGESSLSSPKGSK) is disordered. A compositionally biased stretch (polar residues) spans 37 to 48 (GESSLSSPKGSK). Phosphoserine is present on residues Ser-43, Ser-84, and Ser-123. Disordered regions lie at residues 210-229 (DGNHGNQAKNSGPAETGDLA), 236-287 (TRDS…GSKS), 390-414 (AKEDTDSTRDPSSQVQFPTHRAEPP), and 453-481 (SVLSGDQEEPVGLPAPDSEILQLPGTQGC).

This is an uncharacterized protein from Mus musculus (Mouse).